A 373-amino-acid chain; its full sequence is Bifunctional enzyme IspD/IspF (373 aa).

Residues 1-212 (MPDITLILLG…PCIEAPSGKT (212 aa)) form a 2-C-methyl-D-erythritol 4-phosphate cytidylyltransferase region. The interval 213-373 (LTGFGLDIHP…NLTYYNWKQK (161 aa)) is 2-C-methyl-D-erythritol 2,4-cyclodiphosphate synthase. A divalent metal cation contacts are provided by Asp219 and His221. 4-CDP-2-C-methyl-D-erythritol 2-phosphate-binding positions include 219–221 (DIH) and 245–246 (HS). An a divalent metal cation-binding site is contributed by His253. 4-CDP-2-C-methyl-D-erythritol 2-phosphate-binding positions include 267–269 (DIG), 272–276 (YPDTD), 343–346 (TTAE), Phe350, and Arg353.

In the N-terminal section; belongs to the IspD/TarI cytidylyltransferase family. IspD subfamily. This sequence in the C-terminal section; belongs to the IspF family. It depends on a divalent metal cation as a cofactor.

The catalysed reaction is 2-C-methyl-D-erythritol 4-phosphate + CTP + H(+) = 4-CDP-2-C-methyl-D-erythritol + diphosphate. It catalyses the reaction 4-CDP-2-C-methyl-D-erythritol 2-phosphate = 2-C-methyl-D-erythritol 2,4-cyclic diphosphate + CMP. Its pathway is isoprenoid biosynthesis; isopentenyl diphosphate biosynthesis via DXP pathway; isopentenyl diphosphate from 1-deoxy-D-xylulose 5-phosphate: step 2/6. It functions in the pathway isoprenoid biosynthesis; isopentenyl diphosphate biosynthesis via DXP pathway; isopentenyl diphosphate from 1-deoxy-D-xylulose 5-phosphate: step 4/6. Bifunctional enzyme that catalyzes the formation of 4-diphosphocytidyl-2-C-methyl-D-erythritol from CTP and 2-C-methyl-D-erythritol 4-phosphate (MEP) (IspD), and catalyzes the conversion of 4-diphosphocytidyl-2-C-methyl-D-erythritol 2-phosphate (CDP-ME2P) to 2-C-methyl-D-erythritol 2,4-cyclodiphosphate (ME-CPP) with a corresponding release of cytidine 5-monophosphate (CMP) (IspF). The chain is Bifunctional enzyme IspD/IspF from Sulfurovum sp. (strain NBC37-1).